We begin with the raw amino-acid sequence, 448 residues long: Alpha-2B adrenergic receptor (448 aa).

Topologically, residues 1 to 12 are extracellular; sequence MDHQEPYSVQAT. The chain crosses the membrane as a helical span at residues 13-38; sequence AAIAAVITFLILFTIFGNALVILAVL. The Cytoplasmic segment spans residues 39 to 49; sequence TSRSLPAPQNL. The helical transmembrane segment at 50–75 threads the bilayer; it reads FLVSLAAADILVATLIIPFSLANELL. The Extracellular segment spans residues 76-85; sequence GYWYFWRTWC. Cysteine 85 and cysteine 163 are oxidised to a cystine. The chain crosses the membrane as a helical span at residues 86–108; that stretch reads EVYLALDVLFCTSSIVHLCAISL. Topologically, residues 109 to 130 are cytoplasmic; that stretch reads DRYWAVSRALEYNSKRTPRRIK. The helical transmembrane segment at 131 to 153 threads the bilayer; it reads CIILTVWLIAAVISLPPLIYKGD. Topologically, residues 154-168 are extracellular; it reads QGPSPRGPQCKINQE. The helical transmembrane segment at 169–192 threads the bilayer; that stretch reads AWYILASSIGSFFAPCLIMILVYL. The Cytoplasmic segment spans residues 193–370; the sequence is RIYLIAKRSH…MTREKRFTFV (178 aa). The segment at 203 to 326 is disordered; that stretch reads RRGPRAKGGP…PASMCSPSLQ (124 aa). Over residues 293–309 the composition is skewed to acidic residues; it reads AEEEAEEEEEEEGDECE. The helical transmembrane segment at 371 to 394 threads the bilayer; it reads LAVVIGVFVLCWFPFFFTYSLGAI. The Extracellular segment spans residues 395 to 403; that stretch reads CPQHCKVPH. Residues 404–427 traverse the membrane as a helical segment; sequence GLFQFFFWIGYCNSSLNPVIYTIF. Topologically, residues 428 to 448 are cytoplasmic; it reads NQDFRRAFRRILCRQWTQTAW. Cysteine 440 carries the S-palmitoyl cysteine lipid modification.

This sequence belongs to the G-protein coupled receptor 1 family. Adrenergic receptor subfamily. ADRA2B sub-subfamily. In terms of assembly, interacts with RAB26. Interacts with PPP1R9B.

It is found in the cell membrane. Alpha-2 adrenergic receptors mediate the catecholamine-induced inhibition of adenylate cyclase through the action of G proteins. This chain is Alpha-2B adrenergic receptor (ADRA2B), found in Cavia porcellus (Guinea pig).